The following is a 589-amino-acid chain: Serine/threonine-protein phosphatase 2A 65 kDa regulatory subunit A alpha isoform (589 aa).

Alanine 2 bears the N-acetylalanine mark. 15 HEAT repeats span residues 8 to 46 (DSLYPIAVLIDELRNEDVQLRLNSIKKLSTIALALGVER), 47 to 84 (TRSELLPFLTDTIYDEDEVLLALAEQLGTFTTLVGGPE), 85 to 123 (YVHCLLPPLESLATVEETVVRDKAVESLRAISHEHSPSD), 124 to 161 (LEAHFVPLVKRLAGGDWFTSRTSACGLFSVCYPRVSSA), 162 to 200 (VKAELRQYFRNLCSDDTPMVRRAAASKLGEFAKVLELDN), 201 to 239 (VKSEIIPMFSNLASDEQDSVRLLAVEACVNIAQLLPQED), 240 to 278 (LEALVMPTLRQAAEDKSWRVRYMVADKFTELQKAVGPEI), 279 to 321 (TKTD…RENV), 322 to 360 (IMSQILPCIKELVSDANQHVKSALASVIMGLSPILGKDN), 361 to 399 (TIEHLLPLFLAQLKDECPEVRLNIISNLDCVNEVIGIRQ), 400 to 438 (LSQSLLPAIVELAEDAKWRVRLAIIEYMPLLAGQLGVEF), 439 to 477 (FDEKLNSLCMAWLVDHVYAIREAATSNLKKLVEKFGKEW), 478 to 516 (AHATIIPKVLAMSGDPNYLHRMTTLFCINVLSEVCGQDI), 517 to 555 (TTKHMLPTVLRMAGDPVANVRFNVAKSLQKIGPILDNST), and 556 to 589 (LQSEVKPILEKLTQDQDVDVKYFAQEALTVLSLA). Residues 8 to 399 (DSLYPIAVLI…CVNEVIGIRQ (392 aa)) form a PP2A subunit B binding region. Residues 47 to 321 (TRSELLPFLT…NLSADCRENV (275 aa)) form a polyoma small and medium T antigens Binding region. The segment at 85–239 (YVHCLLPPLE…NIAQLLPQED (155 aa)) is SV40 small T antigen binding. An N6-acetyllysine modification is found at lysine 280. The PP2A subunit C binding stretch occupies residues 400–589 (LSQSLLPAIV…QEALTVLSLA (190 aa)).

Belongs to the phosphatase 2A regulatory subunit A family. In terms of assembly, PP2A consists of a common heterodimeric core enzyme, composed of PPP2CA a 36 kDa catalytic subunit (subunit C) and PPP2R1A a 65 kDa constant regulatory subunit (PR65 or subunit A), that associates with a variety of regulatory subunits. Proteins that associate with the core dimer include three families of regulatory subunits B (the R2/B/PR55/B55, R3/B''/PR72/PR130/PR59 and R5/B'/B56 families), the 48 kDa variable regulatory subunit, viral proteins, and cell signaling molecules. Found in a complex with at least ARL2, PPP2CB, PPP2R1A, PPP2R2A, PPP2R5E and TBCD. Interacts with the PP2A C catalytic subunit PPP2CA. Interacts with the PP2A B subunit PPP2R2A. Interacts with the PP2A B subunit PPP2R5D. Interacts with FOXO1; the interaction dephosphorylates FOXO1 on AKT-mediated phosphorylation sites. Interacts with IPO9. Interacts with TP53 and SGO1. Interacts with PLA2G16; this interaction might decrease PP2A activity. Interacts with CTTNBP2NL. Interacts with GNA12; the interaction promotes protein phosphatase 2A activation causing dephosphorylation of MAPT. Interacts with CIP2A; this interaction stabilizes CIP2A. Interacts with PABIR1/FAM122A. Interacts with ADCY8; antagonizes interaction between ADCY8 and calmodulin. Interacts with CRTC3 (when phosphorylated at 'Ser-391'). Interacts with SPRY2. Part of the core of STRIPAK complexes composed of PP2A catalytic and scaffolding subunits, the striatins (PP2A regulatory subunits), the striatin-associated proteins MOB4, STRIP1 and STRIP2, PDCD10 and members of the STE20 kinases, such as STK24 and STK26. Component of the Integrator-PP2A (INTAC) complex, composed of the Integrator core complex and protein phosphatase 2A subunits PPP2CA and PPP2R1A. (Microbial infection) Interacts with JC virus small t antigen; this interaction inhibits PPP2R1A activity.

The protein resides in the cytoplasm. It localises to the nucleus. Its subcellular location is the chromosome. It is found in the centromere. The protein localises to the lateral cell membrane. The protein resides in the cell projection. It localises to the dendrite. In terms of biological role, the PR65 subunit of protein phosphatase 2A serves as a scaffolding molecule to coordinate the assembly of the catalytic subunit and a variable regulatory B subunit. Upon interaction with GNA12 promotes dephosphorylation of microtubule associated protein TAU/MAPT. Required for proper chromosome segregation and for centromeric localization of SGO1 in mitosis. Together with RACK1 adapter, mediates dephosphorylation of AKT1 at 'Ser-473', preventing AKT1 activation and AKT-mTOR signaling pathway. Dephosphorylation of AKT1 is essential for regulatory T-cells (Treg) homeostasis and stability. Part of the striatin-interacting phosphatase and kinase (STRIPAK) complexes. STRIPAK complexes have critical roles in protein (de)phosphorylation and are regulators of multiple signaling pathways including Hippo, MAPK, nuclear receptor and cytoskeleton remodeling. Different types of STRIPAK complexes are involved in a variety of biological processes such as cell growth, differentiation, apoptosis, metabolism and immune regulation. Key mediator of a quality checkpoint during transcription elongation as part of the Integrator-PP2A (INTAC) complex. The INTAC complex drives premature transcription termination of transcripts that are unfavorably configured for transcriptional elongation: within the INTAC complex, acts as a scaffolding subunit for PPP2CA, which catalyzes dephosphorylation of the C-terminal domain (CTD) of Pol II subunit POLR2A/RPB1 and SUPT5H/SPT5, thereby preventing transcriptional elongation. Regulates the recruitment of the SKA complex to kinetochores. The chain is Serine/threonine-protein phosphatase 2A 65 kDa regulatory subunit A alpha isoform from Homo sapiens (Human).